Here is a 138-residue protein sequence, read N- to C-terminus: Large ribosomal subunit protein bL19 (138 aa).

It belongs to the bacterial ribosomal protein bL19 family.

Its function is as follows. This protein is located at the 30S-50S ribosomal subunit interface and may play a role in the structure and function of the aminoacyl-tRNA binding site. This is Large ribosomal subunit protein bL19 from Rickettsia felis (strain ATCC VR-1525 / URRWXCal2) (Rickettsia azadi).